The following is a 690-amino-acid chain: CREB-H transcription factor homolog let-607 (690 aa).

Disordered stretches follow at residues N87–G118, S166–L192, and P205–P253. 3 stretches are compositionally biased toward low complexity: residues S100–S116, Q170–Q181, and P213–T236. The region spanning D284–L347 is the bZIP domain. The tract at residues K286–K321 is basic motif. Positions K295–Q350 form a coiled coil. The tract at residues L326–L333 is leucine-zipper. Positions H451–H464 are enriched in polar residues. Disordered stretches follow at residues H451–R495 and G509–P536. 2 stretches are compositionally biased toward low complexity: residues Q480–S492 and S514–S535.

The protein belongs to the bZIP family.

The protein resides in the nucleus. Functionally, probable transcription factor, required during migration of the gonadal distal tip cells (DTC). Probably regulates cell adhesion of DTCs via modulation of expression of genes involved in integrin-mediated adhesion, including tln-1, src-1, and integrin pat-2. Modulates expression of genes involved in protein trafficking during embryogenesis, including emo-1, sec-61, calu-1, sec-24.1, enpl-1, sar-1 and tfg-1. The protein is CREB-H transcription factor homolog let-607 of Caenorhabditis elegans.